The chain runs to 277 residues: Shikimate dehydrogenase (NADP(+)) (277 aa).

Residues 15–17 (SLS) and T62 contribute to the shikimate site. K66 functions as the Proton acceptor in the catalytic mechanism. The shikimate site is built by N87 and D102. NADP(+)-binding positions include 127–131 (GAGGA), 151–156 (NRTVDK), and I219. Y221 provides a ligand contact to shikimate. NADP(+) is bound at residue G242.

It belongs to the shikimate dehydrogenase family. As to quaternary structure, homodimer.

It catalyses the reaction shikimate + NADP(+) = 3-dehydroshikimate + NADPH + H(+). It functions in the pathway metabolic intermediate biosynthesis; chorismate biosynthesis; chorismate from D-erythrose 4-phosphate and phosphoenolpyruvate: step 4/7. Functionally, involved in the biosynthesis of the chorismate, which leads to the biosynthesis of aromatic amino acids. Catalyzes the reversible NADPH linked reduction of 3-dehydroshikimate (DHSA) to yield shikimate (SA). The chain is Shikimate dehydrogenase (NADP(+)) from Bacillus cereus (strain AH187).